A 555-amino-acid polypeptide reads, in one-letter code: MFCYQCEQTDRTGARPGCASAKGNCGKDATTADLQDLLVHAVKGIAQYGAIARAMGAPDRDADRFVLYAMFTTLTNVNFHAARFVALLREAAQMRDRVKAACDASARAAGTVVPAQHGPAMWQPADDLAGLLEQAARVGVDNGLDKVGADIVGLRALVLYGLKGVCAYAHHARVLGYERDDIYEGIEAALAFLARDPDDVNALLTQALGLGRLNLTVMELLDSANTGRFGAQQPTAVRVSPVAGKAILVSGHDLGDLHALLEQTAGTGIHVYTHGEMLPAHAYPVLKAFPHLVGNYGGAWQDQQSDFAHFPGPILMTSNCIIEPMPQYRQRIFTTGPVGWPGVRHLEHHDFSTLIRAAQALPGFPATAAEETITVGFGRHAVLGVADKVIDAVKAGQIRHFFLIGGCDGAAPGRNYYTEFAEQAPDDTVVMTLGCNKYRFNRHAFGDIGGIPRLLDVGQCNDSYSAIRIATALADAFECGVNDLPLSLVISWFEQKAAAVLLTLLALGLRNIRLGPTLPAFVTPGVLAVLVEQFGIQPIGDAGTDLAASLARHAA.

Residues Cys3, Cys6, Cys18, and Cys25 each coordinate [4Fe-4S] cluster. The hybrid [4Fe-2O-2S] cluster site is built by His252, Glu276, Cys320, Cys407, Cys435, Cys460, Glu494, and Lys496. Cys407 is modified (cysteine persulfide).

Belongs to the HCP family. Requires [4Fe-4S] cluster as cofactor. Hybrid [4Fe-2O-2S] cluster is required as a cofactor.

Its subcellular location is the cytoplasm. It carries out the reaction A + NH4(+) + H2O = hydroxylamine + AH2 + H(+). Functionally, catalyzes the reduction of hydroxylamine to form NH(3) and H(2)O. This Burkholderia lata (strain ATCC 17760 / DSM 23089 / LMG 22485 / NCIMB 9086 / R18194 / 383) protein is Hydroxylamine reductase.